We begin with the raw amino-acid sequence, 585 residues long: Probable ubiquitin carboxyl-terminal hydrolase 9 (585 aa).

A disordered region spans residues 1–23; that stretch reads MSLLRWMGMNSPGSTDRRKSTWE. Positions 41 to 424 constitute a USP domain; it reads YGLTNYGNTC…TAYVLFYTAA (384 aa). Catalysis depends on C50, which acts as the Nucleophile. Positions 85-110 are disordered; it reads CTKTNHPESSSSRHSKKKSMENRKSS. Catalysis depends on H375, which acts as the Proton acceptor. Polar residues predominate over residues 447 to 470; sequence SQLKQESVEVSNLSSTPRSNSTIT. The segment at 447-473 is disordered; it reads SQLKQESVEVSNLSSTPRSNSTITYPD. At S505 the chain carries Phosphoserine. Disordered stretches follow at residues 511-530 and 540-585; these read FHSR…SRSF and KFFG…RSKR. Residues 542–551 show a composition bias toward polar residues; sequence FGSSQSNSPK. S549 bears the Phosphoserine mark. Positions 553–570 are enriched in basic and acidic residues; that stretch reads SPLRDTHKSSDEHSESKH. Polar residues predominate over residues 574–585; the sequence is LPWQFSRSRSKR.

This sequence belongs to the peptidase C19 family. Interacts with bun107 and bun62.

The protein localises to the nucleus. It localises to the cytoplasm. Its subcellular location is the cell tip. It carries out the reaction Thiol-dependent hydrolysis of ester, thioester, amide, peptide and isopeptide bonds formed by the C-terminal Gly of ubiquitin (a 76-residue protein attached to proteins as an intracellular targeting signal).. Its function is as follows. Ubiquitin C-terminal hydrolase involved in regulating actin dynamics and/or endocytosis at cell tips and septa. This is Probable ubiquitin carboxyl-terminal hydrolase 9 (ubp9) from Schizosaccharomyces pombe (strain 972 / ATCC 24843) (Fission yeast).